The primary structure comprises 413 residues: Heparan-sulfate 6-O-sulfotransferase 1-A (413 aa).

Topologically, residues 9–15 (MVERSSK) are cytoplasmic. A helical; Signal-anchor for type II membrane protein transmembrane segment spans residues 16-36 (FLFIVVGSVLFMLILYQYVAP). Over 37-413 (GMMNFGSPHG…DYMNHIINRW (377 aa)) the chain is Lumenal. 92 to 100 (HIQKTGGTT) is a binding site for 3'-phosphoadenylyl sulfate. Residues 122–123 (KK), Arg139, Trp144, and His149 each bind substrate. The Proton acceptor role is filled by His149. 2 residues coordinate 3'-phosphoadenylyl sulfate: Arg183 and Ser191. Substrate is bound by residues His195 and Trp202. N-linked (GlcNAc...) asparagine glycosylation occurs at Asn262. 315-317 (MQY) is a 3'-phosphoadenylyl sulfate binding site. An N-linked (GlcNAc...) asparagine glycan is attached at Asn318. 321–322 (RA) contacts 3'-phosphoadenylyl sulfate. An N-linked (GlcNAc...) asparagine glycan is attached at Asn329. The segment at 374-401 (PLFPFRRTSSSDSTFRDDAPESEGSRLP) is disordered.

This sequence belongs to the sulfotransferase 6 family. In terms of tissue distribution, during somitogenesis, first expressed in polster and presumptive forebrain. During mid-somitogenesis, expressed in eye, hindbrain and anterior spinal cord. During late somitogenesis, strong expression in eye and hindbrain, decreased levels in midbrain and anterior spinal cord. At 24 hours post-fertilization (hpf), expressed in neural retina and lens, brain and anterior spinal cord. At 36 hpf, retinal expression is confined to the ciliary marginal zone and there is strong expression in tectum, rhombomeres and otic vesicle. At 48 hpf, expressed in retinal ganglion cells and in tectum, rhombomeres and pectoral fin. Not detected in the vasculature during embryogenesis.

It is found in the membrane. It catalyses the reaction alpha-D-glucosaminyl-[heparan sulfate](n) + 3'-phosphoadenylyl sulfate = 6-sulfo-alpha-D-glucosaminyl-[heparan sulfate](n) + adenosine 3',5'-bisphosphate + H(+). Functionally, 6-O-sulfation enzyme which catalyzes the transfer of sulfate from 3'-phosphoadenosine 5'-phosphosulfate (PAPS) to position 6 of the N-sulfoglucosamine residue (GlcNS) of heparan sulfate. This chain is Heparan-sulfate 6-O-sulfotransferase 1-A, found in Danio rerio (Zebrafish).